The chain runs to 338 residues: Ketol-acid reductoisomerase (NADP(+)) (338 aa).

The KARI N-terminal Rossmann domain maps to 1 to 181 (MKVYYDKDAD…GGTKGGVIET (181 aa)). Residues 24-27 (YGSQ), arginine 47, and serine 52 each bind NADP(+). Histidine 107 is an active-site residue. Glycine 133 contacts NADP(+). The KARI C-terminal knotted domain maps to 182 to 327 (NFREETETDL…GQLRDMMPWI (146 aa)). Mg(2+) contacts are provided by aspartate 190, glutamate 194, glutamate 226, and glutamate 230. A substrate-binding site is contributed by serine 251.

Belongs to the ketol-acid reductoisomerase family. Requires Mg(2+) as cofactor.

It carries out the reaction (2R)-2,3-dihydroxy-3-methylbutanoate + NADP(+) = (2S)-2-acetolactate + NADPH + H(+). The enzyme catalyses (2R,3R)-2,3-dihydroxy-3-methylpentanoate + NADP(+) = (S)-2-ethyl-2-hydroxy-3-oxobutanoate + NADPH + H(+). Its pathway is amino-acid biosynthesis; L-isoleucine biosynthesis; L-isoleucine from 2-oxobutanoate: step 2/4. It participates in amino-acid biosynthesis; L-valine biosynthesis; L-valine from pyruvate: step 2/4. Involved in the biosynthesis of branched-chain amino acids (BCAA). Catalyzes an alkyl-migration followed by a ketol-acid reduction of (S)-2-acetolactate (S2AL) to yield (R)-2,3-dihydroxy-isovalerate. In the isomerase reaction, S2AL is rearranged via a Mg-dependent methyl migration to produce 3-hydroxy-3-methyl-2-ketobutyrate (HMKB). In the reductase reaction, this 2-ketoacid undergoes a metal-dependent reduction by NADPH to yield (R)-2,3-dihydroxy-isovalerate. The polypeptide is Ketol-acid reductoisomerase (NADP(+)) (Dechloromonas aromatica (strain RCB)).